The sequence spans 135 residues: Photosystem II extrinsic protein U (135 aa).

The first 29 residues, 1–29 (MKRLLSWLTGALVMASLMAGLVMPSSVYA), serve as a signal peptide directing secretion.

It belongs to the PsbU family. PSII is composed of 1 copy each of membrane proteins PsbA, PsbB, PsbC, PsbD, PsbE, PsbF, PsbH, PsbI, PsbJ, PsbK, PsbL, PsbM, PsbT, PsbX, PsbY, PsbZ, Psb30/Ycf12, peripheral proteins PsbO, CyanoQ (PsbQ), PsbU, PsbV and a large number of cofactors. It forms dimeric complexes.

The protein resides in the cellular thylakoid membrane. One of the extrinsic, lumenal subunits of photosystem II (PSII). PSII is a light-driven water plastoquinone oxidoreductase, using light energy to abstract electrons from H(2)O, generating a proton gradient subsequently used for ATP formation. The extrinsic proteins stabilize the structure of photosystem II oxygen-evolving complex (OEC), the ion environment of oxygen evolution and protect the OEC against heat-induced inactivation. The polypeptide is Photosystem II extrinsic protein U (Synechococcus sp. (strain CC9605)).